A 194-amino-acid polypeptide reads, in one-letter code: uncharacterized protein (194 aa).

The signal sequence occupies residues 1–24; it reads MRKFVAFFVIVALAALLAGCGGQG.

This is an uncharacterized protein from Archaeoglobus fulgidus (strain ATCC 49558 / DSM 4304 / JCM 9628 / NBRC 100126 / VC-16).